Here is a 217-residue protein sequence, read N- to C-terminus: Probable transaldolase (217 aa).

Catalysis depends on lysine 83, which acts as the Schiff-base intermediate with substrate.

Belongs to the transaldolase family. Type 3B subfamily.

Its subcellular location is the cytoplasm. The catalysed reaction is D-sedoheptulose 7-phosphate + D-glyceraldehyde 3-phosphate = D-erythrose 4-phosphate + beta-D-fructose 6-phosphate. It participates in carbohydrate degradation; pentose phosphate pathway; D-glyceraldehyde 3-phosphate and beta-D-fructose 6-phosphate from D-ribose 5-phosphate and D-xylulose 5-phosphate (non-oxidative stage): step 2/3. In terms of biological role, transaldolase is important for the balance of metabolites in the pentose-phosphate pathway. The chain is Probable transaldolase from Caulobacter sp. (strain K31).